A 295-amino-acid chain; its full sequence is Nucleotide-binding protein YvcJ (295 aa).

16 to 23 (GMSGAGKT) contacts ATP. 67–70 (DLRG) is a GTP binding site.

The protein belongs to the RapZ-like family.

Functionally, displays ATPase and GTPase activities. Can also hydrolyze pNPP. May affect the expression of competence via the phosphorylation of a cellular component. This is Nucleotide-binding protein YvcJ (yvcJ) from Bacillus subtilis (strain 168).